Here is a 547-residue protein sequence, read N- to C-terminus: CTP synthase (547 aa).

The interval 1–265 (MARFVFITGG…DQAVLDAFSI (265 aa)) is amidoligase domain. CTP is bound at residue Ser13. Ser13 is a UTP binding site. Residues 14–19 (SLGKGL) and Asp71 contribute to the ATP site. Mg(2+)-binding residues include Asp71 and Glu139. CTP contacts are provided by residues 146 to 148 (DIE), 186 to 191 (KTKPTQ), and Lys222. UTP-binding positions include 186–191 (KTKPTQ) and Lys222. Residues 291 to 546 (NVAIVGKYTQ…VRAAKEVSRL (256 aa)) form the Glutamine amidotransferase type-1 domain. Gly353 contacts L-glutamine. Cys380 (nucleophile; for glutamine hydrolysis) is an active-site residue. Residues 381–384 (LGMQ), Glu404, and Arg474 contribute to the L-glutamine site. Catalysis depends on residues His519 and Glu521.

This sequence belongs to the CTP synthase family. In terms of assembly, homotetramer.

The catalysed reaction is UTP + L-glutamine + ATP + H2O = CTP + L-glutamate + ADP + phosphate + 2 H(+). It carries out the reaction L-glutamine + H2O = L-glutamate + NH4(+). The enzyme catalyses UTP + NH4(+) + ATP = CTP + ADP + phosphate + 2 H(+). Its pathway is pyrimidine metabolism; CTP biosynthesis via de novo pathway; CTP from UDP: step 2/2. With respect to regulation, allosterically activated by GTP, when glutamine is the substrate; GTP has no effect on the reaction when ammonia is the substrate. The allosteric effector GTP functions by stabilizing the protein conformation that binds the tetrahedral intermediate(s) formed during glutamine hydrolysis. Inhibited by the product CTP, via allosteric rather than competitive inhibition. In terms of biological role, catalyzes the ATP-dependent amination of UTP to CTP with either L-glutamine or ammonia as the source of nitrogen. Regulates intracellular CTP levels through interactions with the four ribonucleotide triphosphates. The sequence is that of CTP synthase from Dinoroseobacter shibae (strain DSM 16493 / NCIMB 14021 / DFL 12).